Here is a 465-residue protein sequence, read N- to C-terminus: tRNA-2-methylthio-N(6)-dimethylallyladenosine synthase (465 aa).

Residues 5 to 125 (RKLHIKSFGC…LPELLEKARR (121 aa)) form the MTTase N-terminal domain. [4Fe-4S] cluster is bound by residues Cys14, Cys50, Cys88, Cys166, Cys170, and Cys173. Residues 152–382 (RARGVSAFVT…QLQGLIDSQQ (231 aa)) enclose the Radical SAM core domain. Positions 387–449 (RASIGTTVDV…RYSLIGELVK (63 aa)) constitute a TRAM domain.

It belongs to the methylthiotransferase family. MiaB subfamily. As to quaternary structure, monomer. It depends on [4Fe-4S] cluster as a cofactor.

Its subcellular location is the cytoplasm. It carries out the reaction N(6)-dimethylallyladenosine(37) in tRNA + (sulfur carrier)-SH + AH2 + 2 S-adenosyl-L-methionine = 2-methylsulfanyl-N(6)-dimethylallyladenosine(37) in tRNA + (sulfur carrier)-H + 5'-deoxyadenosine + L-methionine + A + S-adenosyl-L-homocysteine + 2 H(+). Its function is as follows. Catalyzes the methylthiolation of N6-(dimethylallyl)adenosine (i(6)A), leading to the formation of 2-methylthio-N6-(dimethylallyl)adenosine (ms(2)i(6)A) at position 37 in tRNAs that read codons beginning with uridine. In Rhodopseudomonas palustris (strain BisA53), this protein is tRNA-2-methylthio-N(6)-dimethylallyladenosine synthase.